Reading from the N-terminus, the 170-residue chain is Photosystem I assembly protein Ycf3 (170 aa).

3 TPR repeats span residues Ala35–Pro68, Ser72–Leu105, and Gly120–Asn153.

This sequence belongs to the Ycf3 family.

It localises to the plastid. It is found in the chloroplast thylakoid membrane. Functionally, essential for the assembly of the photosystem I (PSI) complex. May act as a chaperone-like factor to guide the assembly of the PSI subunits. In Oryza sativa (Rice), this protein is Photosystem I assembly protein Ycf3.